The chain runs to 529 residues: Bifunctional purine biosynthesis protein PurH (529 aa).

In terms of domain architecture, MGS-like spans 1-148 (MQQRRPVRRA…KNHKDVAIVV (148 aa)). N6-acetyllysine is present on Lys287.

The protein belongs to the PurH family.

It catalyses the reaction (6R)-10-formyltetrahydrofolate + 5-amino-1-(5-phospho-beta-D-ribosyl)imidazole-4-carboxamide = 5-formamido-1-(5-phospho-D-ribosyl)imidazole-4-carboxamide + (6S)-5,6,7,8-tetrahydrofolate. The enzyme catalyses IMP + H2O = 5-formamido-1-(5-phospho-D-ribosyl)imidazole-4-carboxamide. It participates in purine metabolism; IMP biosynthesis via de novo pathway; 5-formamido-1-(5-phospho-D-ribosyl)imidazole-4-carboxamide from 5-amino-1-(5-phospho-D-ribosyl)imidazole-4-carboxamide (10-formyl THF route): step 1/1. The protein operates within purine metabolism; IMP biosynthesis via de novo pathway; IMP from 5-formamido-1-(5-phospho-D-ribosyl)imidazole-4-carboxamide: step 1/1. This Shigella dysenteriae serotype 1 (strain Sd197) protein is Bifunctional purine biosynthesis protein PurH.